Reading from the N-terminus, the 258-residue chain is Ribonuclease PH (258 aa).

Residues R86 and 124-126 (GTR) contribute to the phosphate site.

The protein belongs to the RNase PH family. Homohexameric ring arranged as a trimer of dimers.

The enzyme catalyses tRNA(n+1) + phosphate = tRNA(n) + a ribonucleoside 5'-diphosphate. Its function is as follows. Phosphorolytic 3'-5' exoribonuclease that plays an important role in tRNA 3'-end maturation. Removes nucleotide residues following the 3'-CCA terminus of tRNAs; can also add nucleotides to the ends of RNA molecules by using nucleoside diphosphates as substrates, but this may not be physiologically important. Probably plays a role in initiation of 16S rRNA degradation (leading to ribosome degradation) during starvation. This chain is Ribonuclease PH, found in Caldicellulosiruptor saccharolyticus (strain ATCC 43494 / DSM 8903 / Tp8T 6331).